Reading from the N-terminus, the 133-residue chain is Large ribosomal subunit protein bL12 (133 aa).

Belongs to the bacterial ribosomal protein bL12 family. As to quaternary structure, homodimer. Part of the ribosomal stalk of the 50S ribosomal subunit. Forms a multimeric L10(L12)X complex, where L10 forms an elongated spine to which 2 to 4 L12 dimers bind in a sequential fashion. Binds GTP-bound translation factors.

Its function is as follows. Forms part of the ribosomal stalk which helps the ribosome interact with GTP-bound translation factors. Is thus essential for accurate translation. The polypeptide is Large ribosomal subunit protein bL12 (Ehrlichia chaffeensis (strain ATCC CRL-10679 / Arkansas)).